The primary structure comprises 119 residues: Thrombin-like enzyme TLBan (119 aa).

The Peptidase S1 domain occupies 1-112; it reads VIGGDECNIN…YLLWIQSIIA (112 aa). Catalysis depends on charge relay system residues His40 and Asp59. Cys54 and Cys118 form a disulfide bridge.

In terms of assembly, monomer. Post-translationally, contains both N-linked carbohydrates and sialic acid. Expressed by the venom gland.

It is found in the secreted. With respect to regulation, strongly inhibited by PMSF and slightly inhibited by EDTA and soybean trypsin inhibitor. Functionally, thrombin-like snake venom serine protease, with high clotting activity in vitro. Also has fibrinogenolytic ability, showing a fast degradation of fibrinogen Aalpha chain (FGA), a slow degradation of Bbeta chain (FGB) and no degradation of gamma chain. Also causes platelet aggregation in platelet rich plasma (PRP) and washed platelet suspension. The sequence is that of Thrombin-like enzyme TLBan from Bothrocophias andianus (Andean lancehead).